We begin with the raw amino-acid sequence, 206 residues long: Translation initiation factor IF-3 (206 aa).

The protein belongs to the IF-3 family. As to quaternary structure, monomer.

The protein localises to the cytoplasm. IF-3 binds to the 30S ribosomal subunit and shifts the equilibrium between 70S ribosomes and their 50S and 30S subunits in favor of the free subunits, thus enhancing the availability of 30S subunits on which protein synthesis initiation begins. The protein is Translation initiation factor IF-3 of Chlorobium luteolum (strain DSM 273 / BCRC 81028 / 2530) (Pelodictyon luteolum).